Reading from the N-terminus, the 319-residue chain is Cytochrome c biogenesis protein CcsA (319 aa).

8 helical membrane-spanning segments follow: residues Phe15–Val35, Gly44–Gly64, Leu71–Phe91, Leu96–Phe116, Met141–Ile161, Val223–Asn243, Trp258–Leu278, and Ala284–Leu304.

The protein belongs to the CcmF/CycK/Ccl1/NrfE/CcsA family. May interact with Ccs1.

It localises to the plastid. Its subcellular location is the chloroplast thylakoid membrane. In terms of biological role, required during biogenesis of c-type cytochromes (cytochrome c6 and cytochrome f) at the step of heme attachment. This is Cytochrome c biogenesis protein CcsA from Fagopyrum esculentum subsp. ancestrale (Wild buckwheat).